The following is a 157-amino-acid chain: Thiosulfate sulfurtransferase/rhodanese-like domain-containing protein 3 (157 aa).

Residues 52–154 form the Rhodanese domain; it reads NSKDIMLIDV…WVTYEISEEK (103 aa). Lys96 carries the post-translational modification N6-succinyllysine. Cys114 serves as the catalytic Cysteine persulfide intermediate.

The polypeptide is Thiosulfate sulfurtransferase/rhodanese-like domain-containing protein 3 (Tstd3) (Mus musculus (Mouse)).